The following is a 221-amino-acid chain: Riboflavin kinase (221 aa).

The interval 1 to 89 (MENIYIALKT…ISSILRFSQE (89 aa)) is H-T-H motif-like. The interval 90-221 (LKLVGAVQDG…EVLASIDGKL (132 aa)) is riboflavin kinase. 99 to 104 (GLGEGK) contacts CDP. Mg(2+)-binding residues include T128 and N130. Residues S185 and E192 each coordinate FMN. 197–200 (KYLR) lines the CDP pocket.

Belongs to the archaeal riboflavin kinase family. Requires Mg(2+) as cofactor.

The catalysed reaction is riboflavin + CTP = CDP + FMN + H(+). It participates in cofactor biosynthesis; FMN biosynthesis; FMN from riboflavin (CTP route): step 1/1. Functionally, catalyzes the CTP-dependent phosphorylation of riboflavin (vitamin B2) to form flavin mononucleotide (FMN). The chain is Riboflavin kinase (ribK) from Picrophilus torridus (strain ATCC 700027 / DSM 9790 / JCM 10055 / NBRC 100828 / KAW 2/3).